Here is a 339-residue protein sequence, read N- to C-terminus: Anthranilate phosphoribosyltransferase (339 aa).

5-phospho-alpha-D-ribose 1-diphosphate contacts are provided by residues G82, 85-86, 92-95, 110-118, and S122; these read GD, NIST, and KHGNRGISS. G82 serves as a coordination point for anthranilate. S94 contributes to the Mg(2+) binding site. N113 serves as a coordination point for anthranilate. R168 is a binding site for anthranilate. Mg(2+) is bound by residues D227 and E228.

The protein belongs to the anthranilate phosphoribosyltransferase family. Homodimer. It depends on Mg(2+) as a cofactor.

The enzyme catalyses N-(5-phospho-beta-D-ribosyl)anthranilate + diphosphate = 5-phospho-alpha-D-ribose 1-diphosphate + anthranilate. It participates in amino-acid biosynthesis; L-tryptophan biosynthesis; L-tryptophan from chorismate: step 2/5. Catalyzes the transfer of the phosphoribosyl group of 5-phosphorylribose-1-pyrophosphate (PRPP) to anthranilate to yield N-(5'-phosphoribosyl)-anthranilate (PRA). The polypeptide is Anthranilate phosphoribosyltransferase (Vesicomyosocius okutanii subsp. Calyptogena okutanii (strain HA)).